A 959-amino-acid polypeptide reads, in one-letter code: E3 ubiquitin-protein ligase NEDD4-like (959 aa).

The 121-residue stretch at 10-130 (PWHGVCVPVC…TEDPTMERPY (121 aa)) folds into the C2 domain. Disordered regions lie at residues 183–206 (SNDS…WEEK), 248–275 (AAHR…DVPE), and 289–316 (DSLG…EELS). A WW 1 domain is found at 197–230 (PPLPPGWEEKVDNLGRTYYVNHNNRTTQWHRPSL). Phosphoserine is present on Ser-316. The residue at position 322 (Thr-322) is a Phosphothreonine. A Phosphoserine; by WNK1 and WNK4 modification is found at Ser-346. The 34-residue stretch at 369–402 (PGLPSGWEERKDAKGRTYYVNHNNRTTTWTRPIM) folds into the WW 2 domain. Residues 408 to 478 (GASGSATNSN…YNSPKPQHKV (71 aa)) are disordered. Ser-430 carries the phosphoserine modification. Ser-432 is subject to Phosphoserine; by SGK1. Residue Ser-433 is modified to Phosphoserine; by WNK1 and WNK4. Basic and acidic residues predominate over residues 444–455 (GAKDSPVRRAVK). Ser-448 is subject to Phosphoserine; by SGK1. Phosphoserine occurs at positions 459, 463, 467, and 471. WW domains follow at residues 481–514 (SFLP…DPRL) and 532–565 (GPLP…DPRL). The region spanning 624 to 958 (RPDVLKARLW…VENAQGFEGV (335 aa)) is the HECT domain. Cys-926 functions as the Glycyl thioester intermediate in the catalytic mechanism.

As to quaternary structure, interacts with UBE2E3. Interacts with NDFIP1; this interaction activates the E3 ubiquitin-protein ligase. Interacts with NDFIP2; this interaction activates the E3 ubiquitin-protein ligase. Interacts (via WW domains) with SCN1A. Interacts (via WW domains) with SCN2A. Interacts (via WW domains) with SCN3A. Interacts (via WW domains) with SCN5A. Interacts (via WW domains) with SCN8A. Interacts (via WW domains) with SCN9A. Interacts (via WW domains) with SCN10A. Interacts (via WW domains) with CLCN5. Interacts with SMAD2. Interacts with SMAD3. Interacts with SMAD6. Interacts with SMAD7. The phosphorylated form interacts with 14-3-3 proteins. Interacts with TNK2. Interacts with WNK1. Interacts with SGK1. Interacts (via C2 domain) with NPC2. Interacts with ARRDC4. Interacts with KCNQ1; promotes internalization of KCNQ1. Interacts (via domains WW1, 3 and 4) with USP36; the interaction inhibits ubiquitination of, at least, NTRK1, KCNQ2 and KCNQ3 by NEDD4L. Interacts with PRRG4 (via cytoplasmic domain). Interacts with LDLRAD3; the interaction is direct. Interacts with TTYH2 and TTYH3. In terms of processing, phosphorylated; which impairs interaction with SCNN. Interaction with YWHAH inhibits dephosphorylation. Auto-ubiquitinated.

It localises to the cytoplasm. The protein resides in the golgi apparatus. It is found in the endosome. Its subcellular location is the multivesicular body. The catalysed reaction is S-ubiquitinyl-[E2 ubiquitin-conjugating enzyme]-L-cysteine + [acceptor protein]-L-lysine = [E2 ubiquitin-conjugating enzyme]-L-cysteine + N(6)-ubiquitinyl-[acceptor protein]-L-lysine.. The protein operates within protein modification; protein ubiquitination. With respect to regulation, activated by NDFIP1- and NDFIP2-binding. In terms of biological role, E3 ubiquitin-protein ligase which accepts ubiquitin from an E2 ubiquitin-conjugating enzyme in the form of a thioester and then directly transfers the ubiquitin to targeted substrates. Inhibits TGF-beta signaling by triggering SMAD2 and TGFBR1 ubiquitination and proteasome-dependent degradation. Promotes ubiquitination and internalization of various plasma membrane channels such as ENaC, Nav1.2, Nav1.3, Nav1.5, Nav1.7, Nav1.8, Kv1.3, KCNH2, EAAT1 or CLC5. Promotes ubiquitination and degradation of SGK1 and TNK2. Ubiquitinates BRAT1 and this ubiquitination is enhanced in the presence of NDFIP1. Plays a role in dendrite formation by melanocytes. Involved in the regulation of TOR signaling. Ubiquitinates TTYH2 and TTYH3 and regulates protein levels of TTYH2. This Pongo abelii (Sumatran orangutan) protein is E3 ubiquitin-protein ligase NEDD4-like (NEDD4L).